We begin with the raw amino-acid sequence, 56 residues long: Large ribosomal subunit protein bL32 (56 aa).

Belongs to the bacterial ribosomal protein bL32 family.

In Prochlorococcus marinus (strain MIT 9301), this protein is Large ribosomal subunit protein bL32.